The chain runs to 204 residues: Ribonuclease HII (204 aa).

An RNase H type-2 domain is found at 17–204; the sequence is QLVAGVDEVG…KPVQQLLQGD (188 aa). Residues D23, E24, and D115 each coordinate a divalent metal cation.

Belongs to the RNase HII family. Mn(2+) serves as cofactor. The cofactor is Mg(2+).

The protein localises to the cytoplasm. It carries out the reaction Endonucleolytic cleavage to 5'-phosphomonoester.. In terms of biological role, endonuclease that specifically degrades the RNA of RNA-DNA hybrids. This Hahella chejuensis (strain KCTC 2396) protein is Ribonuclease HII.